We begin with the raw amino-acid sequence, 159 residues long: Endoribonuclease YbeY (159 aa).

Positions 126, 130, and 136 each coordinate Zn(2+).

Belongs to the endoribonuclease YbeY family. Zn(2+) is required as a cofactor.

It is found in the cytoplasm. Functionally, single strand-specific metallo-endoribonuclease involved in late-stage 70S ribosome quality control and in maturation of the 3' terminus of the 16S rRNA. The sequence is that of Endoribonuclease YbeY from Thermodesulfovibrio yellowstonii (strain ATCC 51303 / DSM 11347 / YP87).